The following is a 309-amino-acid chain: Homoserine O-succinyltransferase (309 aa).

Residue C142 is the Acyl-thioester intermediate of the active site. Substrate-binding residues include K163 and S192. Residue H235 is the Proton acceptor of the active site. E237 is a catalytic residue. A substrate-binding site is contributed by R249.

This sequence belongs to the MetA family. In terms of assembly, homodimer.

The protein resides in the cytoplasm. It catalyses the reaction L-homoserine + succinyl-CoA = O-succinyl-L-homoserine + CoA. The protein operates within amino-acid biosynthesis; L-methionine biosynthesis via de novo pathway; O-succinyl-L-homoserine from L-homoserine: step 1/1. In terms of biological role, transfers a succinyl group from succinyl-CoA to L-homoserine, forming succinyl-L-homoserine. In Salmonella arizonae (strain ATCC BAA-731 / CDC346-86 / RSK2980), this protein is Homoserine O-succinyltransferase.